Reading from the N-terminus, the 350-residue chain is MFCCLGYEWLSGGCKTWHSAWVINTLADHRHRGTDFGGSPWLLIITVFLRSYKFAISLCTSYLCVSFLKTIFPSQNGHDGSTDVQQRARRSNRRRQEGIKIVLEDIFTLWRQVETKVRAKICKMKVTTKVNRHDKINGKRKTAKEHLRKLSMKEREHGEKERQVSEAEENGKLDMKEIHTYMEMFQRAQALRRRAEDYYRCKITPSARKPLCNRVRMAAAEHRHSSGLPYWPYLTAETLKNRMGHQPPPPTQQHSIIDNSLSLKTPPECLLTPLPPSALPSADDNLKTPAECLLYPLPPSADDNLKTPPECLLTPLPPSAPPSVDDNLKTPPKCVCSLPFHPQRMIISRN.

Positions 306 to 325 (KTPPECLLTPLPPSAPPSVD) are disordered.

The protein belongs to the NPIP family.

This is Nuclear pore complex-interacting protein family member A3 (NPIPA3) from Homo sapiens (Human).